Consider the following 161-residue polypeptide: Nucleotide-binding protein Bamb_2603 (161 aa).

The protein belongs to the YajQ family.

In terms of biological role, nucleotide-binding protein. In Burkholderia ambifaria (strain ATCC BAA-244 / DSM 16087 / CCUG 44356 / LMG 19182 / AMMD) (Burkholderia cepacia (strain AMMD)), this protein is Nucleotide-binding protein Bamb_2603.